The chain runs to 406 residues: Cysteine desulfurase (406 aa).

The residue at position 226 (K226) is an N6-(pyridoxal phosphate)lysine. Residue C364 is the Cysteine persulfide intermediate of the active site.

It belongs to the class-V pyridoxal-phosphate-dependent aminotransferase family. Csd subfamily. In terms of assembly, homodimer. Interacts with SufE and the SufBCD complex composed of SufB, SufC and SufD. The interaction with SufE is required to mediate the direct transfer of the sulfur atom from the S-sulfanylcysteine. The cofactor is pyridoxal 5'-phosphate.

The protein resides in the cytoplasm. The enzyme catalyses (sulfur carrier)-H + L-cysteine = (sulfur carrier)-SH + L-alanine. It catalyses the reaction L-selenocysteine + AH2 = hydrogenselenide + L-alanine + A + H(+). The protein operates within cofactor biosynthesis; iron-sulfur cluster biosynthesis. Cysteine desulfurases mobilize the sulfur from L-cysteine to yield L-alanine, an essential step in sulfur metabolism for biosynthesis of a variety of sulfur-containing biomolecules. Component of the suf operon, which is activated and required under specific conditions such as oxidative stress and iron limitation. Acts as a potent selenocysteine lyase in vitro, that mobilizes selenium from L-selenocysteine. Selenocysteine lyase activity is however unsure in vivo. This Escherichia coli O45:K1 (strain S88 / ExPEC) protein is Cysteine desulfurase.